Here is a 273-residue protein sequence, read N- to C-terminus: MSEAGDMGLVVVGAAGRMGQTLIRAIHTIPGARVIGAVERADSPHLGKDAGELAGIGIINVPIGDDPLPVFAKADGVLDFTTPASSVEFAGYAAQARIVHVIGTTGCSADDNARIAAAARHATIVKSGNMSLGVNLLAVLVEQAARALDADDFDIEILEMHHKHKVDAPSGTALLLGEAAAAGRGIALAGNDVRSRDGHTGVRKTGSIGFATLRGGSVVGDHSVILAGTGERITLSHHAEDRAIFARGAVKAALWARGKKPGLYSMRDVLGLS.

NAD(+) is bound by residues 13–18 (GAAGRM) and Glu-39. NADP(+) is bound at residue Arg-40. Residues 103-105 (GTT) and 127-130 (SGNM) contribute to the NAD(+) site. His-161 serves as the catalytic Proton donor/acceptor. Residue His-162 coordinates (S)-2,3,4,5-tetrahydrodipicolinate. Lys-165 serves as the catalytic Proton donor. 171–172 (GT) lines the (S)-2,3,4,5-tetrahydrodipicolinate pocket.

Belongs to the DapB family.

Its subcellular location is the cytoplasm. The catalysed reaction is (S)-2,3,4,5-tetrahydrodipicolinate + NAD(+) + H2O = (2S,4S)-4-hydroxy-2,3,4,5-tetrahydrodipicolinate + NADH + H(+). It carries out the reaction (S)-2,3,4,5-tetrahydrodipicolinate + NADP(+) + H2O = (2S,4S)-4-hydroxy-2,3,4,5-tetrahydrodipicolinate + NADPH + H(+). Its pathway is amino-acid biosynthesis; L-lysine biosynthesis via DAP pathway; (S)-tetrahydrodipicolinate from L-aspartate: step 4/4. Its function is as follows. Catalyzes the conversion of 4-hydroxy-tetrahydrodipicolinate (HTPA) to tetrahydrodipicolinate. This chain is 4-hydroxy-tetrahydrodipicolinate reductase 1, found in Mesorhizobium japonicum (strain LMG 29417 / CECT 9101 / MAFF 303099) (Mesorhizobium loti (strain MAFF 303099)).